Here is a 446-residue protein sequence, read N- to C-terminus: Phosphoglucosamine mutase (446 aa).

Serine 103 (phosphoserine intermediate) is an active-site residue. Mg(2+) contacts are provided by serine 103, aspartate 242, aspartate 244, and aspartate 246. Residue serine 103 is modified to Phosphoserine.

It belongs to the phosphohexose mutase family. Mg(2+) serves as cofactor. Activated by phosphorylation.

It carries out the reaction alpha-D-glucosamine 1-phosphate = D-glucosamine 6-phosphate. Catalyzes the conversion of glucosamine-6-phosphate to glucosamine-1-phosphate. The sequence is that of Phosphoglucosamine mutase from Vibrio cholerae serotype O1 (strain ATCC 39315 / El Tor Inaba N16961).